The following is a 181-amino-acid chain: uncharacterized protein (181 aa).

Residues 1–23 (MKKCLLFLTTIALILSLSTNAFA) form the signal peptide.

This is an uncharacterized protein from Bacillus subtilis (strain 168).